Here is an 80-residue protein sequence, read N- to C-terminus: Serine palmitoyltransferase small subunit B (80 aa).

Residues 1 to 11 are Cytoplasmic-facing; that stretch reads MDVKHIKDYLS. Residues 12 to 29 traverse the membrane as a helical segment; sequence WLYYQYLLITCSYVLEPW. Over 30-36 the chain is Lumenal; sequence EQSIFNT. The chain crosses the membrane as a helical span at residues 37–57; that stretch reads LLLTIIAMVIYSSYIFIPIHV. Residues 58 to 80 lie on the Cytoplasmic side of the membrane; the sequence is RLAVEFFSRIFGGQHESTVALMS.

Belongs to the SPTSS family. SPTSSB subfamily. As to quaternary structure, component of the serine palmitoyltransferase (SPT) complex, which is composed of SPTLC1, SPTLC2 or SPTLC3 and SPTSSA or SPTSSB. The heterodimer consisting of SPTLC1 and SPTLC2/SPTLC3 forms the catalytic core of the enzyme, while SPTSSA or SPTSSB subunits determine substrate specificity. SPT also interacts with ORMDL proteins, especially ORMDL3, which negatively regulate SPT activity in the presence of ceramides.

The protein resides in the endoplasmic reticulum membrane. Its pathway is lipid metabolism; sphingolipid metabolism. Its function is as follows. Component of the serine palmitoyltransferase multisubunit enzyme (SPT) that catalyzes the initial and rate-limiting step in sphingolipid biosynthesis by condensing L-serine and activated acyl-CoA (most commonly palmitoyl-CoA) to form long-chain bases. The SPT complex is composed of SPTLC1, SPTLC2 or SPTLC3 and SPTSSA or SPTSSB. Within this complex, the heterodimer consisting of SPTLC1 and SPTLC2/SPTLC3 forms the catalytic core. Within the SPT complex, SPTSSB stimulates the catalytic activity and plays a role in substrate specificity. SPT complexes with this subunit showing a preference for longer acyl-CoAs. The SPTLC1-SPTLC2-SPTSSB complex shows a strong preference for C18-CoA substrate, while the SPTLC1-SPTLC3-SPTSSB isozyme displays an ability to use a broader range of acyl-CoAs, without apparent preference. The polypeptide is Serine palmitoyltransferase small subunit B (sptssb) (Xenopus laevis (African clawed frog)).